Here is a 99-residue protein sequence, read N- to C-terminus: CLAVATA3/ESR (CLE)-related protein 11 (99 aa).

The signal sequence occupies residues 1-31 (MTKQPKPCSFLFHISLLSALFVFLLISFAFT). Hydroxyproline occurs at positions 91 and 94. O-linked (Ara...) hydroxyproline glycosylation occurs at P94.

It belongs to the CLV3/ESR signal peptide family. The O-glycosylation (arabinosylation) of the hydroxyproline Pro-94 enhances binding affinity of the CLE11p peptide for its receptor. In terms of tissue distribution, mostly expressed in seedlings, roots and siliques, and, to a lower extent, in leaves, flowers, stems and apex.

It localises to the secreted. The protein resides in the extracellular space. In terms of biological role, extracellular signal peptide that regulates cell fate. Represses root apical meristem maintenance. Regulates the transition of protophloem cells from proliferation to differentiation, thus impinging on postembryonic growth capacity of the root meristem; this signaling pathway requires CRN and CLV2. This is CLAVATA3/ESR (CLE)-related protein 11 from Arabidopsis thaliana (Mouse-ear cress).